The chain runs to 502 residues: Smr domain-containing protein C1235.03 (502 aa).

The interval 150 to 184 (LITSNIGHRSRQRKKKTKKATNSRKPLSKFQSNTE) is disordered. A compositionally biased stretch (basic residues) spans 157 to 171 (HRSRQRKKKTKKATN). Residues 411-459 (SLDLHGATVREAKTIVRERVAAWWAKEADTSPNSIRPFVIVTGRGNHSI) enclose the Smr domain.

Its subcellular location is the nucleus. It is found in the nucleolus. This Schizosaccharomyces pombe (strain 972 / ATCC 24843) (Fission yeast) protein is Smr domain-containing protein C1235.03.